A 333-amino-acid polypeptide reads, in one-letter code: Cap-specific mRNA (nucleoside-2'-O-)-methyltransferase (333 aa).

Tyrosine 22 contacts mRNA. S-adenosyl-L-methionine-binding residues include glutamine 39, tyrosine 66, glycine 68, glycine 72, aspartate 95, arginine 97, valine 116, and aspartate 138. The tract at residues 169–249 (PVASSLKWRC…NKIVRNKVVV (81 aa)) is binding to NPH-I. Residues 169–333 (PVASSLKWRC…NSKRSVRGNK (165 aa)) are binding to Rap94. The active-site For methyltransferase activity is lysine 175. Residues 177-180 (RCPF), aspartate 182, 205-207 (SAE), and glutamate 233 contribute to the mRNA site.

Belongs to the class I-like SAM-binding methyltransferase superfamily. Poxvirus/kinetoplastid 2'-O-MTase family. In terms of assembly, interacts with poly(A) polymerase catalytic subunit OPG063. Interacts with OPG109 and OPG123; these interactions might help linking transcription to capping and polyadenylation.

Its subcellular location is the virion. The enzyme catalyses a 5'-end (N(7)-methyl 5'-triphosphoguanosine)-ribonucleoside in mRNA + S-adenosyl-L-methionine = a 5'-end (N(7)-methyl 5'-triphosphoguanosine)-(2'-O-methyl-ribonucleoside) in mRNA + S-adenosyl-L-homocysteine + H(+). Displays methyltransferase, positive regulation of the poly(A) polymerase and transcription elongation activities. Involved in the modification of both mRNA ends and in intermediate and late gene positive transcription elongation. At the mRNAs 5' end, methylates the ribose 2' OH group of the first transcribed nucleotide, thereby producing a 2'-O-methylpurine cap. At the 3' end, functions as a processivity factor which stimulates the activity of the viral poly(A) polymerase OPG063 that creates mRNA's poly(A) tail. In the presence of OPG102, OPG063 does not dissociate from the RNA allowing tail elongation to around 250 adenylates. In Homo sapiens (Human), this protein is Cap-specific mRNA (nucleoside-2'-O-)-methyltransferase (OPG102).